We begin with the raw amino-acid sequence, 85 residues long: HssA/B-like protein 59 (85 aa).

It belongs to the hssA/B family.

This chain is HssA/B-like protein 59 (hssl59), found in Dictyostelium discoideum (Social amoeba).